The sequence spans 2599 residues: Protein DOP1 homolog (2599 aa).

2 disordered regions span residues 532-571 and 595-701; these read EQSG…SDSR and ASNQ…LDEE. Polar residues-rich tracts occupy residues 534–549, 595–604, and 625–636; these read SGGS…NSAS, ASNQSVGRQS, and ASDTGQQSSSDL. S753 is subject to Phosphoserine. A compositionally biased stretch (basic and acidic residues) spans 1240 to 1251; sequence PRIEIPHKETPL. Disordered regions lie at residues 1240–1316 and 1347–1368; these read PRIE…SSSA and TYRL…EQKD. Residues 1264-1282 are compositionally biased toward polar residues; that stretch reads QPSQEQPANQPDNSLQYDQ. Positions 1297-1309 are enriched in basic and acidic residues; it reads SELRETSIEKEDS. At T1355 the chain carries Phosphothreonine. Phosphoserine is present on residues S1360, S1363, and S1371. The disordered stretch occupies residues 1409-1442; the sequence is CISKTSTDSNISGSHVEQPEQEEETEPGTESTIN. Positions 1410 to 1423 are enriched in polar residues; sequence ISKTSTDSNISGSH. S2525 bears the Phosphoserine mark.

The protein belongs to the DOP1 family.

It localises to the golgi apparatus membrane. In terms of biological role, may be involved in protein traffic between late Golgi and early endosomes. This chain is Protein DOP1 homolog, found in Drosophila melanogaster (Fruit fly).